The sequence spans 457 residues: Argininosuccinate lyase (457 aa).

It belongs to the lyase 1 family. Argininosuccinate lyase subfamily.

It is found in the cytoplasm. It catalyses the reaction 2-(N(omega)-L-arginino)succinate = fumarate + L-arginine. The protein operates within amino-acid biosynthesis; L-arginine biosynthesis; L-arginine from L-ornithine and carbamoyl phosphate: step 3/3. This Psychrobacter arcticus (strain DSM 17307 / VKM B-2377 / 273-4) protein is Argininosuccinate lyase.